Reading from the N-terminus, the 232-residue chain is Sugar fermentation stimulation protein homolog (232 aa).

The protein belongs to the SfsA family.

The polypeptide is Sugar fermentation stimulation protein homolog (Brucella anthropi (strain ATCC 49188 / DSM 6882 / CCUG 24695 / JCM 21032 / LMG 3331 / NBRC 15819 / NCTC 12168 / Alc 37) (Ochrobactrum anthropi)).